The following is a 269-amino-acid chain: Chymotrypsin-like elastase family member 2A (269 aa).

Positions 1 to 16 (MIRALLLSTLVAGALS) are cleaved as a signal peptide. A propeptide spans 17–28 (CGVPTYPPQLSR) (activation peptide). In terms of domain architecture, Peptidase S1 spans 29 to 267 (VVGGEDARPN…YNDWISSVIE (239 aa)). C58 and C74 are oxidised to a cystine. Residues H73 and D121 each act as charge relay system in the active site. Cystine bridges form between C155–C222, C186–C202, and C212–C243. S216 acts as the Charge relay system in catalysis.

This sequence belongs to the peptidase S1 family. Elastase subfamily. Interacts with CPA1. Interacts with SERPINA1. In terms of tissue distribution, pancreas.

The protein localises to the secreted. It carries out the reaction Preferential cleavage: Leu-|-Xaa, Met-|-Xaa and Phe-|-Xaa. Hydrolyzes elastin.. Its function is as follows. Elastase that enhances insulin signaling and might have a physiologic role in cellular glucose metabolism. Circulates in plasma and reduces platelet hyperactivation, triggers both insulin secretion and degradation, and increases insulin sensitivity. In Bos taurus (Bovine), this protein is Chymotrypsin-like elastase family member 2A (CELA2A).